A 602-amino-acid chain; its full sequence is Pentatricopeptide repeat-containing protein At3g04760, chloroplastic (602 aa).

The transit peptide at 1–78 directs the protein to the chloroplast; sequence MTPLSSELVG…TDATLPTERR (78 aa). Positions 42–64 are enriched in polar residues; the sequence is FSNSNPNNDNGRSFSSSGARNLQ. The interval 42–85 is disordered; the sequence is FSNSNPNNDNGRSFSSSGARNLQTTTTTDATLPTERRQQHSQSL. A compositionally biased stretch (low complexity) spans 65–74; sequence TTTTTDATLP. 14 PPR repeats span residues 88 to 122, 123 to 153, 157 to 191, 192 to 226, 227 to 261, 262 to 296, 297 to 331, 332 to 366, 367 to 401, 402 to 436, 437 to 471, 472 to 506, 507 to 541, and 542 to 576; these read RDTQ…GYNP, DVIL…LEKF, DVFA…DFSP, DTVT…NCQP, TVIT…GLKP, DMFT…GCEP, DVIS…KCDP, NVVT…GLTP, DAYS…GCLP, DIVN…GCSP, NSSS…GIDP, DEIT…EFHP, SVVT…GCRP, and NETT…DAIS.

This sequence belongs to the PPR family. P subfamily.

Its subcellular location is the plastid. It is found in the chloroplast. This Arabidopsis thaliana (Mouse-ear cress) protein is Pentatricopeptide repeat-containing protein At3g04760, chloroplastic.